The chain runs to 222 residues: Vesicle transport v-SNARE 12 (222 aa).

Ser-2 carries the post-translational modification N-acetylserine. Residues 2–199 (SDVFEGYERQ…MSRRMTRNKW (198 aa)) lie on the Cytoplasmic side of the membrane. Positions 68 to 95 (KAVCLSKLREYKSDLNQLKKEFKRVSSA) form a coiled coil. Residues 200-220 (IITSVIVALVLAIILIISYKL) form a helical; Anchor for type IV membrane protein membrane-spanning segment. Residues 221–222 (SH) are Vesicular-facing.

The protein belongs to the VTI1 family. Forms SNARE complexes with the t-SNAREs SYP61 and either SYP41 or SYP42, and with a much lower affinity with SYP51 in the TGN. Also interacts with VPS45, a Sec1 protein, but not with SYP21 or SYP22. Binds to EPSIN2. Core constituent of the SNARE complex required for membrane fusion at the trans-Golgi network. Interacts with SCYL2B. In terms of tissue distribution, expressed in roots, stems, flowers and leaves.

It is found in the golgi apparatus. The protein localises to the trans-Golgi network membrane. The protein resides in the prevacuolar compartment membrane. It localises to the cell membrane. Functionally, together with either SYP41 or SYP61, required for membrane fusion; the fusion of phospholipid vesicles containing SYP41 or SYP61 and VTI12 is triggered by YKT61 and YKT62. Functions as a v-SNARE responsible for the docking or fusion of transport vesicles within the trans-Golgi network (TGN) and mediates liposome fusion. Necessary to deliver proteins to the protein storage vacuole (PSV). May be also involved in retrograde traffic to the cis-Golgi. The polypeptide is Vesicle transport v-SNARE 12 (Arabidopsis thaliana (Mouse-ear cress)).